The chain runs to 345 residues: Biotin synthase (345 aa).

Positions 38–256 constitute a Radical SAM core domain; the sequence is QQVQVSTLLS…IAVARIMMPS (219 aa). 3 residues coordinate [4Fe-4S] cluster: Cys53, Cys57, and Cys60. [2Fe-2S] cluster is bound by residues Cys97, Cys128, Cys188, and Arg260.

This sequence belongs to the radical SAM superfamily. Biotin synthase family. As to quaternary structure, homodimer. The cofactor is [4Fe-4S] cluster. It depends on [2Fe-2S] cluster as a cofactor.

It catalyses the reaction (4R,5S)-dethiobiotin + (sulfur carrier)-SH + 2 reduced [2Fe-2S]-[ferredoxin] + 2 S-adenosyl-L-methionine = (sulfur carrier)-H + biotin + 2 5'-deoxyadenosine + 2 L-methionine + 2 oxidized [2Fe-2S]-[ferredoxin]. The protein operates within cofactor biosynthesis; biotin biosynthesis; biotin from 7,8-diaminononanoate: step 2/2. Functionally, catalyzes the conversion of dethiobiotin (DTB) to biotin by the insertion of a sulfur atom into dethiobiotin via a radical-based mechanism. The protein is Biotin synthase of Photorhabdus laumondii subsp. laumondii (strain DSM 15139 / CIP 105565 / TT01) (Photorhabdus luminescens subsp. laumondii).